The primary structure comprises 430 residues: Adenylosuccinate synthetase (430 aa).

Residues 12-18 (GDEGKGK) and 40-42 (GHT) contribute to the GTP site. Residue Asp-13 is the Proton acceptor of the active site. 2 residues coordinate Mg(2+): Asp-13 and Gly-40. IMP contacts are provided by residues 13–16 (DEGK), 38–41 (NAGH), Thr-130, Arg-144, Gln-224, and Thr-239. The active-site Proton donor is the His-41. The segment at 277–298 (PFPTEQDNETGRKIGERGREFG) is disordered. The segment covering 285-296 (ETGRKIGERGRE) has biased composition (basic and acidic residues). A substrate-binding site is contributed by 299–305 (TNTGRPR). Residue Arg-303 participates in IMP binding. Residues Arg-305, 331 to 333 (KLD), and 413 to 415 (STS) contribute to the GTP site.

This sequence belongs to the adenylosuccinate synthetase family. Homodimer. Requires Mg(2+) as cofactor.

The protein localises to the cytoplasm. The enzyme catalyses IMP + L-aspartate + GTP = N(6)-(1,2-dicarboxyethyl)-AMP + GDP + phosphate + 2 H(+). Its pathway is purine metabolism; AMP biosynthesis via de novo pathway; AMP from IMP: step 1/2. Plays an important role in the de novo pathway of purine nucleotide biosynthesis. Catalyzes the first committed step in the biosynthesis of AMP from IMP. This chain is Adenylosuccinate synthetase, found in Bradyrhizobium sp. (strain BTAi1 / ATCC BAA-1182).